The following is a 290-amino-acid chain: Lipoyl synthase (290 aa).

Residues cysteine 44, cysteine 49, cysteine 55, cysteine 70, cysteine 74, cysteine 77, and serine 281 each coordinate [4Fe-4S] cluster. One can recognise a Radical SAM core domain in the interval 56–270; the sequence is WRCGTATFMI…KQIGLEKGFS (215 aa).

This sequence belongs to the radical SAM superfamily. Lipoyl synthase family. [4Fe-4S] cluster is required as a cofactor.

The protein localises to the cytoplasm. It catalyses the reaction [[Fe-S] cluster scaffold protein carrying a second [4Fe-4S](2+) cluster] + N(6)-octanoyl-L-lysyl-[protein] + 2 oxidized [2Fe-2S]-[ferredoxin] + 2 S-adenosyl-L-methionine + 4 H(+) = [[Fe-S] cluster scaffold protein] + N(6)-[(R)-dihydrolipoyl]-L-lysyl-[protein] + 4 Fe(3+) + 2 hydrogen sulfide + 2 5'-deoxyadenosine + 2 L-methionine + 2 reduced [2Fe-2S]-[ferredoxin]. The protein operates within protein modification; protein lipoylation via endogenous pathway; protein N(6)-(lipoyl)lysine from octanoyl-[acyl-carrier-protein]: step 2/2. Catalyzes the radical-mediated insertion of two sulfur atoms into the C-6 and C-8 positions of the octanoyl moiety bound to the lipoyl domains of lipoate-dependent enzymes, thereby converting the octanoylated domains into lipoylated derivatives. The protein is Lipoyl synthase of Treponema denticola (strain ATCC 35405 / DSM 14222 / CIP 103919 / JCM 8153 / KCTC 15104).